Reading from the N-terminus, the 252-residue chain is Triosephosphate isomerase (252 aa).

10–12 (NWK) contributes to the substrate binding site. The active-site Electrophile is H96. The Proton acceptor role is filled by E168. Substrate is bound by residues G174, S214, and 235 to 236 (GG).

It belongs to the triosephosphate isomerase family. As to quaternary structure, homodimer.

The protein localises to the cytoplasm. The enzyme catalyses D-glyceraldehyde 3-phosphate = dihydroxyacetone phosphate. It functions in the pathway carbohydrate biosynthesis; gluconeogenesis. The protein operates within carbohydrate degradation; glycolysis; D-glyceraldehyde 3-phosphate from glycerone phosphate: step 1/1. Functionally, involved in the gluconeogenesis. Catalyzes stereospecifically the conversion of dihydroxyacetone phosphate (DHAP) to D-glyceraldehyde-3-phosphate (G3P). In Lactobacillus helveticus (strain DPC 4571), this protein is Triosephosphate isomerase.